Here is a 1376-residue protein sequence, read N- to C-terminus: Ubiquitin carboxyl-terminal hydrolase 47 (1376 aa).

N6-acetyllysine is present on Lys-122. The 377-residue stretch at 188–564 (VGLVNQAMTC…NAYMLIYRLK (377 aa)) folds into the USP domain. The active-site Nucleophile is Cys-197. The segment at 426–452 (EKSPQTESCTDSGAENEGSCHSDQMSN) is disordered. A compositionally biased stretch (polar residues) spans 430 to 452 (QTESCTDSGAENEGSCHSDQMSN). Catalysis depends on His-503, which acts as the Proton acceptor. Residue Ser-832 is modified to Phosphoserine. Disordered regions lie at residues 835–863 (SYSK…KGPA), 880–971 (LKSL…SSDT), and 985–1025 (GLDS…ESGK). Low complexity predominate over residues 882–900 (SLSLQQQQQDGDNGDSSKS). Ser-911 and Ser-934 each carry phosphoserine. Residues 930–939 (HIQTSDPENF) show a composition bias toward polar residues. The span at 941–951 (SEERSDSDVNN) shows a compositional bias: basic and acidic residues. The segment covering 954–970 (STSSVDSDILSSSHSSD) has biased composition (low complexity). Residues 998–1007 (KANEGKKETW) show a composition bias toward basic and acidic residues. Acidic residues predominate over residues 1008–1021 (DTAEEDSGTDSEYD). Ser-1014 carries the post-translational modification Phosphoserine. Thr-1016 is subject to Phosphothreonine. Position 1018 is a phosphoserine (Ser-1018).

This sequence belongs to the peptidase C19 family. USP47 subfamily. Interacts with BTRC and FBXW11. Interacts with POLB.

The protein localises to the cytoplasm. It carries out the reaction Thiol-dependent hydrolysis of ester, thioester, amide, peptide and isopeptide bonds formed by the C-terminal Gly of ubiquitin (a 76-residue protein attached to proteins as an intracellular targeting signal).. In terms of biological role, ubiquitin-specific protease that specifically deubiquitinates monoubiquitinated DNA polymerase beta (POLB), stabilizing POLB thereby playing a role in base-excision repair (BER). Acts as a regulator of cell growth and genome integrity. May also indirectly regulate CDC25A expression at a transcriptional level. The polypeptide is Ubiquitin carboxyl-terminal hydrolase 47 (Usp47) (Mus musculus (Mouse)).